The sequence spans 370 residues: Alanine racemase (370 aa).

Lysine 36 functions as the Proton acceptor; specific for D-alanine in the catalytic mechanism. Lysine 36 is subject to N6-(pyridoxal phosphate)lysine. Arginine 134 contacts substrate. Tyrosine 265 functions as the Proton acceptor; specific for L-alanine in the catalytic mechanism. Methionine 313 is a binding site for substrate.

The protein belongs to the alanine racemase family. Pyridoxal 5'-phosphate is required as a cofactor.

The enzyme catalyses L-alanine = D-alanine. Its pathway is amino-acid biosynthesis; D-alanine biosynthesis; D-alanine from L-alanine: step 1/1. Functionally, catalyzes the interconversion of L-alanine and D-alanine. May also act on other amino acids. The polypeptide is Alanine racemase (alr) (Desulforamulus reducens (strain ATCC BAA-1160 / DSM 100696 / MI-1) (Desulfotomaculum reducens)).